The primary structure comprises 284 residues: Undecaprenyl-diphosphatase 2 (284 aa).

Helical transmembrane passes span 6–26, 46–66, 94–114, 119–139, 183–203, 227–247, and 262–282; these read VIFI…EFIP, FAEM…VVLY, FGMN…LFYD, LFNL…LLVV, IMGG…SFFL, TLWI…IIVM, and FAVY…TNII.

Belongs to the UppP family.

The protein resides in the cell membrane. The enzyme catalyses di-trans,octa-cis-undecaprenyl diphosphate + H2O = di-trans,octa-cis-undecaprenyl phosphate + phosphate + H(+). Its function is as follows. Catalyzes the dephosphorylation of undecaprenyl diphosphate (UPP). Confers resistance to bacitracin. In Clostridioides difficile (strain 630) (Peptoclostridium difficile), this protein is Undecaprenyl-diphosphatase 2.